The primary structure comprises 625 residues: Endoglucanase 13 (625 aa).

Positions 1 to 34 are cleaved as a signal peptide; it reads MAATMNKTPATTFLLIPAAASLVLLLAAAASVEA. The Nucleophile role is filled by Asp-91. The active site involves His-427. A glycan (N-linked (GlcNAc...) asparagine) is linked at Asn-440. Catalysis depends on residues Asp-479 and Glu-488. The segment at 509–530 is disordered; that stretch reads ADNTPEYTPAPNAPSPSNGGSP.

The protein belongs to the glycosyl hydrolase 9 (cellulase E) family. As to expression, expressed in roots and flowers.

Its subcellular location is the secreted. It catalyses the reaction Endohydrolysis of (1-&gt;4)-beta-D-glucosidic linkages in cellulose, lichenin and cereal beta-D-glucans.. The polypeptide is Endoglucanase 13 (GLU6) (Oryza sativa subsp. japonica (Rice)).